Consider the following 382-residue polypeptide: 2-heptyl-3-hydroxy-4(1H)-quinolone synthase (382 aa).

The protein belongs to the 3-hydroxybenzoate 6-hydroxylase family.

The catalysed reaction is 2-heptyl-4(1H)-quinolone + NADH + O2 + H(+) = 2-heptyl-3-hydroxy-4(1H)-quinolone + NAD(+) + H2O. In terms of biological role, involved in the terminal step of the biosynthesis of quinolone which in addition to serve as a potent signal for quorum sensing, chelates iron and promotes the formation of membrane vesicles (MVs). Catalyzes the hydroxylation of 2-heptyl-4-quinolone (C7-HHQ) to yield 2-heptyl-3-hydroxy-4-quinolone (PQS). In Pseudomonas aeruginosa (strain ATCC 15692 / DSM 22644 / CIP 104116 / JCM 14847 / LMG 12228 / 1C / PRS 101 / PAO1), this protein is 2-heptyl-3-hydroxy-4(1H)-quinolone synthase (pqsH).